Consider the following 346-residue polypeptide: MGAAATGTPLRIGTRGSLLAMTQAGTVRDALIAAGRPAELVVVKTPGDMSSDPVQKIGVGVFTSALRDELAAGTIDLAVHSYKDLPTAPDPRFVIAAIPPREDPRDALVARDGLVLGELPAGAKVGTSAPRRVAQLRALGLGLDIVPLRGNLDSRLARVTDGELDAVVVARAGLSRIGRTAVITEALEPVQMLPAPAQGALAVECRSEDAALIEALAELDDAATRAAVVAERALLAELEAGCTAPVGALAEVVESLDDDGRIVEELSLRGCAAAVDGSEVLRASVVGDPERAAELGRALARELLELGARELLVEVAATEPGARSGTGAVRPPETDLSNPSPMENPQ.

Cys242 carries the post-translational modification S-(dipyrrolylmethanemethyl)cysteine. The segment at 317 to 346 (ATEPGARSGTGAVRPPETDLSNPSPMENPQ) is disordered. Residues 335–346 (DLSNPSPMENPQ) show a composition bias toward polar residues.

Belongs to the HMBS family. In terms of assembly, monomer. Dipyrromethane serves as cofactor.

It catalyses the reaction 4 porphobilinogen + H2O = hydroxymethylbilane + 4 NH4(+). It participates in porphyrin-containing compound metabolism; protoporphyrin-IX biosynthesis; coproporphyrinogen-III from 5-aminolevulinate: step 2/4. Its function is as follows. Tetrapolymerization of the monopyrrole PBG into the hydroxymethylbilane pre-uroporphyrinogen in several discrete steps. The polypeptide is Porphobilinogen deaminase (Nocardia farcinica (strain IFM 10152)).